Here is a 142-residue protein sequence, read N- to C-terminus: Hemoglobin subunit alpha 1 (142 aa).

Ser-1 carries the N-acetylserine modification. A Globin domain is found at 1–142 (SLSDKDKAAV…VSLALSERYR (142 aa)). Residue His-59 participates in O2 binding. His-88 lines the heme b pocket.

The protein belongs to the globin family. As to quaternary structure, hb1 is a heterotetramer of two alpha-1 chains and two beta-1 chains. Hb2 is a heterotetramer of two alpha-2 chains and two beta-1 chains. HbC is a heterotetramer of two alpha-1 chains and two beta-2 chains. Red blood cells.

Involved in oxygen transport from gills to the various peripheral tissues. This Eleginops maclovinus (Patagonian blennie) protein is Hemoglobin subunit alpha 1.